A 341-amino-acid chain; its full sequence is Tetraacyldisaccharide 4'-kinase (341 aa).

65–72 (TVGGSGKT) contributes to the ATP binding site.

It belongs to the LpxK family.

It carries out the reaction a lipid A disaccharide + ATP = a lipid IVA + ADP + H(+). Its pathway is glycolipid biosynthesis; lipid IV(A) biosynthesis; lipid IV(A) from (3R)-3-hydroxytetradecanoyl-[acyl-carrier-protein] and UDP-N-acetyl-alpha-D-glucosamine: step 6/6. Its function is as follows. Transfers the gamma-phosphate of ATP to the 4'-position of a tetraacyldisaccharide 1-phosphate intermediate (termed DS-1-P) to form tetraacyldisaccharide 1,4'-bis-phosphate (lipid IVA). In Shewanella woodyi (strain ATCC 51908 / MS32), this protein is Tetraacyldisaccharide 4'-kinase.